A 447-amino-acid chain; its full sequence is 3-phosphoshikimate 1-carboxyvinyltransferase 2 (447 aa).

3-phosphoshikimate contacts are provided by K40, S41, and R45. K40 provides a ligand contact to phosphoenolpyruvate. 2 residues coordinate phosphoenolpyruvate: G109 and R138. 3-phosphoshikimate is bound by residues S184, S185, Q186, D329, and H356. Q186 is a binding site for phosphoenolpyruvate. D329 acts as the Proton acceptor in catalysis. Phosphoenolpyruvate contacts are provided by R360, R403, and K428.

This sequence belongs to the EPSP synthase family. In terms of assembly, monomer.

The protein resides in the cytoplasm. It carries out the reaction 3-phosphoshikimate + phosphoenolpyruvate = 5-O-(1-carboxyvinyl)-3-phosphoshikimate + phosphate. It participates in metabolic intermediate biosynthesis; chorismate biosynthesis; chorismate from D-erythrose 4-phosphate and phosphoenolpyruvate: step 6/7. Catalyzes the transfer of the enolpyruvyl moiety of phosphoenolpyruvate (PEP) to the 5-hydroxyl of shikimate-3-phosphate (S3P) to produce enolpyruvyl shikimate-3-phosphate and inorganic phosphate. In Halalkalibacterium halodurans (strain ATCC BAA-125 / DSM 18197 / FERM 7344 / JCM 9153 / C-125) (Bacillus halodurans), this protein is 3-phosphoshikimate 1-carboxyvinyltransferase 2.